The primary structure comprises 189 residues: Coatomer subunit zeta (189 aa).

The protein belongs to the adaptor complexes small subunit family. As to quaternary structure, oligomeric complex that consists of at least the alpha, beta, beta', gamma, delta, epsilon and zeta subunits.

It localises to the cytoplasm. Its subcellular location is the golgi apparatus membrane. The protein resides in the cytoplasmic vesicle. It is found in the COPI-coated vesicle membrane. Functionally, the coatomer is a cytosolic protein complex that binds to dilysine motifs and reversibly associates with Golgi non-clathrin-coated vesicles, which further mediate biosynthetic protein transport from the ER, via the Golgi up to the trans Golgi network. Coatomer complex is required for budding from Golgi membranes, and is essential for the retrograde Golgi-to-ER transport of dilysine-tagged proteins. The zeta subunit may be involved in regulating the coat assembly and, hence, the rate of biosynthetic protein transport due to its association-dissociation properties with the coatomer complex. The polypeptide is Coatomer subunit zeta (RET3) (Saccharomyces cerevisiae (strain ATCC 204508 / S288c) (Baker's yeast)).